A 118-amino-acid chain; its full sequence is Large ribosomal subunit protein uL18 (118 aa).

This sequence belongs to the universal ribosomal protein uL18 family. As to quaternary structure, part of the 50S ribosomal subunit; part of the 5S rRNA/L5/L18/L25 subcomplex. Contacts the 5S and 23S rRNAs.

Functionally, this is one of the proteins that bind and probably mediate the attachment of the 5S RNA into the large ribosomal subunit, where it forms part of the central protuberance. This is Large ribosomal subunit protein uL18 from Campylobacter jejuni subsp. jejuni serotype O:2 (strain ATCC 700819 / NCTC 11168).